Here is a 137-residue protein sequence, read N- to C-terminus: Nucleoside diphosphate kinase (137 aa).

ATP-binding residues include Lys-9, Phe-57, Arg-85, Thr-91, and Arg-102. His-119 (pros-phosphohistidine intermediate) is an active-site residue.

The protein belongs to the NDK family. Homotetramer. It depends on Mg(2+) as a cofactor.

The protein localises to the cytoplasm. The enzyme catalyses a 2'-deoxyribonucleoside 5'-diphosphate + ATP = a 2'-deoxyribonucleoside 5'-triphosphate + ADP. It carries out the reaction a ribonucleoside 5'-diphosphate + ATP = a ribonucleoside 5'-triphosphate + ADP. Major role in the synthesis of nucleoside triphosphates other than ATP. The ATP gamma phosphate is transferred to the NDP beta phosphate via a ping-pong mechanism, using a phosphorylated active-site intermediate. The protein is Nucleoside diphosphate kinase of Streptococcus thermophilus (strain CNRZ 1066).